Here is a 449-residue protein sequence, read N- to C-terminus: Tubulin beta-5 chain (449 aa).

GTP-binding residues include Gln-11, Glu-70, Ser-139, Gly-143, Thr-144, Gly-145, Asn-205, and Asn-227. Glu-70 serves as a coordination point for Mg(2+). The segment at 427–449 (QDATADEEGEYDVEEEEEGDYET) is disordered. The segment covering 430-449 (TADEEGEYDVEEEEEGDYET) has biased composition (acidic residues).

The protein belongs to the tubulin family. In terms of assembly, dimer of alpha and beta chains. A typical microtubule is a hollow water-filled tube with an outer diameter of 25 nm and an inner diameter of 15 nM. Alpha-beta heterodimers associate head-to-tail to form protofilaments running lengthwise along the microtubule wall with the beta-tubulin subunit facing the microtubule plus end conferring a structural polarity. Microtubules usually have 13 protofilaments but different protofilament numbers can be found in some organisms and specialized cells. Requires Mg(2+) as cofactor.

The protein resides in the cytoplasm. The protein localises to the cytoskeleton. Its function is as follows. Tubulin is the major constituent of microtubules, a cylinder consisting of laterally associated linear protofilaments composed of alpha- and beta-tubulin heterodimers. Microtubules grow by the addition of GTP-tubulin dimers to the microtubule end, where a stabilizing cap forms. Below the cap, tubulin dimers are in GDP-bound state, owing to GTPase activity of alpha-tubulin. The sequence is that of Tubulin beta-5 chain (TUBB5) from Arabidopsis thaliana (Mouse-ear cress).